A 633-amino-acid polypeptide reads, in one-letter code: tRNA uridine 5-carboxymethylaminomethyl modification enzyme MnmG (633 aa).

FAD-binding positions include 15–20 (GAGHAG), V127, and S182. Position 276 to 290 (276 to 290 (GPRYCPSIEDKIVRF)) interacts with NAD(+). Q373 serves as a coordination point for FAD.

This sequence belongs to the MnmG family. In terms of assembly, homodimer. Heterotetramer of two MnmE and two MnmG subunits. Requires FAD as cofactor.

It localises to the cytoplasm. Its function is as follows. NAD-binding protein involved in the addition of a carboxymethylaminomethyl (cmnm) group at the wobble position (U34) of certain tRNAs, forming tRNA-cmnm(5)s(2)U34. The protein is tRNA uridine 5-carboxymethylaminomethyl modification enzyme MnmG of Streptococcus thermophilus (strain ATCC BAA-491 / LMD-9).